We begin with the raw amino-acid sequence, 212 residues long: Golgi SNAP receptor complex member 2 (212 aa).

N-acetylmethionine is present on M1. Residues 1 to 190 (MEPLYQQTHK…LIEKRAFQDK (190 aa)) are Cytoplasmic-facing. Residues 61-107 (NRRQNAKLRVDQLKYDVQHLQTALRNFQHRRQAKEQQERQRDELLSR) are a coiled coil. The IxM motif; signal for cargo packaging into COPII-coated vesicles signature appears at 118-120 (IPM). The helical; Anchor for type IV membrane protein transmembrane segment at 191-211 (YFMIGGMLLTCAVMFLVVQYL) threads the bilayer. Residue T212 is a topological domain, vesicular.

The protein belongs to the GOSR2 family. Part of a unique SNARE complex composed of the Golgi SNAREs GOSR1, STX5 and YKT6. Interacts with BET1.

It localises to the golgi apparatus. Its subcellular location is the cis-Golgi network membrane. The protein localises to the golgi apparatus membrane. The protein resides in the endoplasmic reticulum membrane. Involved in transport of proteins from the cis/medial-Golgi to the trans-Golgi network. This chain is Golgi SNAP receptor complex member 2 (Gosr2), found in Rattus norvegicus (Rat).